A 92-amino-acid chain; its full sequence is MGRSLKKGPFIADSLLKKIEKLNASGDKQVIKTWSRASTILPQMVGHTIAVHNGRQHVPVFVSEQMVGHKLGEFAPTRTFKGHAKSDKKARR.

It belongs to the universal ribosomal protein uS19 family.

Functionally, protein S19 forms a complex with S13 that binds strongly to the 16S ribosomal RNA. This Picosynechococcus sp. (strain ATCC 27264 / PCC 7002 / PR-6) (Agmenellum quadruplicatum) protein is Small ribosomal subunit protein uS19.